The primary structure comprises 809 residues: Protein PHOX3 (809 aa).

The disordered stretch occupies residues 1–22 (MEKQNEEISTDDAETSQSQLVD). 5 TPR repeats span residues 126 to 159 (AQGLKEEGNKLFQKRDYDGAMFKYGEAIKILPKD), 164 to 199 (SHVRANVASCYMQLEPGEFAKAIHECDLALSVTPDH), 200 to 233 (NKALLKRARCYEALNKLDLALRDVCMVSKLDPKN), 235 to 265 (MASEIVEKLKRTLESKGLRINNSVIELPPDY), and 274 to 311 (AALWAKLGKVRVKKTKKSNQVEEKSEGEGEDVEPEKKN). Positions 288 to 339 (TKKSNQVEEKSEGEGEDVEPEKKNNVLAEKGKEKIKMKVKGKQSDKRSDTSK) are disordered. S298 carries the post-translational modification Phosphoserine. Basic and acidic residues predominate over residues 307 to 339 (PEKKNNVLAEKGKEKIKMKVKGKQSDKRSDTSK). The 80-residue stretch at 359 to 438 (NKDVKFVYSD…GTMRFYVVEV (80 aa)) folds into the PB1 domain. TPR repeat units lie at residues 508–541 (SEAMEEVVTSDAAQGPFDRAAQQFQEVAARSLLN), 563–597 (ESVSEQVKTAYECAKKEHANAKEKYEEAMKIKPEC), and 615–648 (SWYYVLVSHLDLKTWPYADVVQFYQSAESNIKKS). Residues 656-686 (ETGKESEPSQAGKTDCLTHEKDLGSSTQNNP) are disordered. The TPR 9 repeat unit spans residues 709 to 741 (SIMEYKLDQPFWRESLEAAMEKFELAGTCKDDV).

Functionally, carboxylate clamp type tetratricopeptide repeat protein that may act as a potential Hsp90/Hsp70 co-chaperone. Contributes to polar growth of root hairs. In Arabidopsis thaliana (Mouse-ear cress), this protein is Protein PHOX3.